We begin with the raw amino-acid sequence, 219 residues long: Adenylate kinase (219 aa).

10 to 15 (GAGKGT) contributes to the ATP binding site. Residues 30-59 (STGDMLRAAVKAETPVGLEAKKVMDAGQLV) form an NMP region. Residues threonine 31, arginine 36, 57 to 59 (QLV), 85 to 88 (GFPR), and glutamine 92 each bind AMP. The segment at 122 to 159 (GRRVHLSSGRTYHVLFNPPKQEGLDDETGEPLVQRADD) is LID. ATP-binding positions include arginine 123 and 132-133 (TY). AMP is bound by residues arginine 156 and arginine 167. Position 203 (glycine 203) interacts with ATP.

It belongs to the adenylate kinase family. As to quaternary structure, monomer.

The protein resides in the cytoplasm. The catalysed reaction is AMP + ATP = 2 ADP. The protein operates within purine metabolism; AMP biosynthesis via salvage pathway; AMP from ADP: step 1/1. In terms of biological role, catalyzes the reversible transfer of the terminal phosphate group between ATP and AMP. Plays an important role in cellular energy homeostasis and in adenine nucleotide metabolism. In Chlorobium limicola (strain DSM 245 / NBRC 103803 / 6330), this protein is Adenylate kinase.